The sequence spans 453 residues: GTPase Der (453 aa).

2 consecutive EngA-type G domains span residues proline 4–aspartate 169 and isoleucine 178–arginine 353. GTP-binding positions include glycine 10 to serine 17, aspartate 57 to leucine 61, asparagine 120 to glutamate 123, glycine 184 to serine 191, aspartate 231 to isoleucine 235, and asparagine 296 to aspartate 299. The KH-like domain occupies arginine 354–lysine 439.

It belongs to the TRAFAC class TrmE-Era-EngA-EngB-Septin-like GTPase superfamily. EngA (Der) GTPase family. In terms of assembly, associates with the 50S ribosomal subunit.

Functionally, GTPase that plays an essential role in the late steps of ribosome biogenesis. This chain is GTPase Der, found in Cyanothece sp. (strain PCC 7425 / ATCC 29141).